We begin with the raw amino-acid sequence, 101 residues long: Co-chaperonin GroES (101 aa).

Belongs to the GroES chaperonin family. As to quaternary structure, heptamer of 7 subunits arranged in a ring. Interacts with the chaperonin GroEL.

Its subcellular location is the cytoplasm. Together with the chaperonin GroEL, plays an essential role in assisting protein folding. The GroEL-GroES system forms a nano-cage that allows encapsulation of the non-native substrate proteins and provides a physical environment optimized to promote and accelerate protein folding. GroES binds to the apical surface of the GroEL ring, thereby capping the opening of the GroEL channel. In Lawsonia intracellularis, this protein is Co-chaperonin GroES.